The following is a 224-amino-acid chain: Ribonuclease T (224 aa).

An Exonuclease domain is found at 32–206; sequence VVVDVETGGF…YDTEKTAELF (175 aa). Mg(2+) contacts are provided by Asp35, Glu37, His193, and Asp198. His193 functions as the Proton donor/acceptor in the catalytic mechanism.

The protein belongs to the RNase T family. As to quaternary structure, homodimer. Mg(2+) serves as cofactor.

Trims short 3' overhangs of a variety of RNA species, leaving a one or two nucleotide 3' overhang. Responsible for the end-turnover of tRNA: specifically removes the terminal AMP residue from uncharged tRNA (tRNA-C-C-A). Also appears to be involved in tRNA biosynthesis. This chain is Ribonuclease T, found in Pseudomonas paraeruginosa (strain DSM 24068 / PA7) (Pseudomonas aeruginosa (strain PA7)).